The following is a 346-amino-acid chain: UDP-N-acetylenolpyruvoylglucosamine reductase (346 aa).

The region spanning 17-187 (IESQAYALIE…VAVGFTLKKE (171 aa)) is the FAD-binding PCMH-type domain. Arg163 is an active-site residue. Ser233 serves as the catalytic Proton donor. Glu329 is an active-site residue.

The protein belongs to the MurB family. Requires FAD as cofactor.

The protein resides in the cytoplasm. The enzyme catalyses UDP-N-acetyl-alpha-D-muramate + NADP(+) = UDP-N-acetyl-3-O-(1-carboxyvinyl)-alpha-D-glucosamine + NADPH + H(+). It participates in cell wall biogenesis; peptidoglycan biosynthesis. Its function is as follows. Cell wall formation. This Photobacterium profundum (strain SS9) protein is UDP-N-acetylenolpyruvoylglucosamine reductase.